The primary structure comprises 394 residues: Glycerol-1-phosphate dehydrogenase [NAD(P)+] (394 aa).

Residues D54, 116 to 120 (GTIHD), and 138 to 141 (TAPS) contribute to the NAD(+) site. D143 serves as a coordination point for substrate. S147 provides a ligand contact to NAD(+). Residue D190 coordinates substrate. Residues D190 and H270 each coordinate Ni(2+). Substrate is bound at residue H274. H290 serves as a coordination point for Ni(2+).

It belongs to the glycerol-1-phosphate dehydrogenase family. In terms of assembly, homodimer. Ni(2+) is required as a cofactor.

It localises to the cytoplasm. The catalysed reaction is sn-glycerol 1-phosphate + NAD(+) = dihydroxyacetone phosphate + NADH + H(+). The enzyme catalyses sn-glycerol 1-phosphate + NADP(+) = dihydroxyacetone phosphate + NADPH + H(+). Its function is as follows. Catalyzes the NAD(P)H-dependent reduction of dihydroxyacetonephosphate (DHAP or glycerone phosphate) to glycerol 1-phosphate (G1P). The G1P thus generated is probably used for the synthesis of phosphoglycerolipids in Gram-positive bacterial species. Prefers NADH over NADPH as coenzyme. Is also able to catalyze the reverse reaction, i.e. the NAD(+)-dependent oxidation of G1P but not of G3P. Does not possess glycerol dehydrogenase activity. This chain is Glycerol-1-phosphate dehydrogenase [NAD(P)+] (egsA), found in Bacillus subtilis (strain 168).